The sequence spans 294 residues: Cytidine deaminase (294 aa).

CMP/dCMP-type deaminase domains are found at residues 49 to 169 (TPQQ…FGPA) and 188 to 294 (ETQD…YIAL). 90 to 92 (NLE) provides a ligand contact to substrate. Residue His-103 coordinates Zn(2+). The active-site Proton donor is Glu-105. Zn(2+) is bound by residues Cys-130 and Cys-133.

It belongs to the cytidine and deoxycytidylate deaminase family. In terms of assembly, homodimer. Zn(2+) serves as cofactor.

It catalyses the reaction cytidine + H2O + H(+) = uridine + NH4(+). The enzyme catalyses 2'-deoxycytidine + H2O + H(+) = 2'-deoxyuridine + NH4(+). Its function is as follows. This enzyme scavenges exogenous and endogenous cytidine and 2'-deoxycytidine for UMP synthesis. The protein is Cytidine deaminase of Pasteurella multocida (strain Pm70).